The following is a 180-amino-acid chain: Insulin-like growth factor 2 (180 aa).

A signal peptide spans 1–24 (MGIPMGKSMLVLLTFLAFASCCIA). The b stretch occupies residues 25-52 (AYRPSETLCGGELVDTLQFVCGDRGFYF). Intrachain disulfides connect Cys-33/Cys-71, Cys-45/Cys-84, and Cys-70/Cys-75. A c region spans residues 53–64 (SRPASRVSRRSR). Positions 65–85 (GIVEECCFRSCDLALLETYCA) are a. The interval 86-91 (TPAKSE) is d. Positions 92-180 (RDVSTPPTVL…APPEMASNRK (89 aa)) are cleaved as a propeptide — e peptide. Residues Thr-96, Thr-99, and Thr-163 are each glycosylated (O-linked (GalNAc...) threonine). Residues 161–180 (LPTQDPAHGGAPPEMASNRK) are disordered.

It belongs to the insulin family. In terms of assembly, interacts with MYORG; this interaction is required for IGF2 secretion. Interacts with integrins ITGAV:ITGB3 and ITGA6:ITGB4; integrin-binding is required for IGF2 signaling. Interacts with IGFBP2. Post-translationally, O-glycosylated with core 1 or possibly core 8 glycans. Thr-96 is a minor glycosylation site compared to Thr-99. In terms of processing, proteolytically processed by PCSK4, proIGF2 is cleaved at Arg-128 and Arg-92 to generate big-IGF2 and mature IGF2. As to expression, expressed in heart, placenta, lung, liver, muscle, kidney, tongue, limb, eye and pancreas.

It is found in the secreted. The insulin-like growth factors possess growth-promoting activity. Major fetal growth hormone in mammals. Plays a key role in regulating fetoplacental development. IGF2 is influenced by placental lactogen. Also involved in tissue differentiation. In adults, involved in glucose metabolism in adipose tissue, skeletal muscle and liver. Acts as a ligand for integrin which is required for IGF2 signaling. Positively regulates myogenic transcription factor MYOD1 function by facilitating the recruitment of transcriptional coactivators, thereby controlling muscle terminal differentiation. Inhibits myoblast differentiation and modulates metabolism via increasing the mitochondrial respiration rate. In terms of biological role, preptin undergoes glucose-mediated co-secretion with insulin, and acts as a physiological amplifier of glucose-mediated insulin secretion. Exhibits osteogenic properties by increasing osteoblast mitogenic activity through phosphoactivation of MAPK1 and MAPK3. This chain is Insulin-like growth factor 2, found in Homo sapiens (Human).